Here is a 238-residue protein sequence, read N- to C-terminus: MEEGLQRCFVLHRRPYSESSLILDVFSEEYGRLSIISKGARSKRSNLKGVLQAFTPLLMKWSGKGSMRTLRQAETISLGIPLTGINLYSAMYINELLVRVVEQETPYPALFLDYLTALTELAQSTNPEPALRRFELALLSAMGYGVDFLHCAGSGEMVSPEMTYRYREQQGFMASIRHDPLMSFKGNELIAISERRFTTPEQLKAAKRFTRIALKPYLGGKPLKSRELFLPRTRSILK.

This sequence belongs to the RecO family.

Its function is as follows. Involved in DNA repair and RecF pathway recombination. This chain is DNA repair protein RecO, found in Aliivibrio fischeri (strain ATCC 700601 / ES114) (Vibrio fischeri).